The primary structure comprises 345 residues: uncharacterized protein (345 aa).

The next 2 helical transmembrane spans lie at 23 to 43 and 56 to 76; these read VVGF…YSYV and FLIA…FVAL. Positions 326 to 345 are disordered; the sequence is VTEPTTNSKRKPVKAKKAKK. A compositionally biased stretch (basic residues) spans 333–345; the sequence is SKRKPVKAKKAKK.

Its subcellular location is the cell membrane. This is an uncharacterized protein from Mycoplasma pneumoniae (strain ATCC 29342 / M129 / Subtype 1) (Mycoplasmoides pneumoniae).